A 557-amino-acid polypeptide reads, in one-letter code: Protein PECTIC ARABINOGALACTAN SYNTHESIS-RELATED (557 aa).

Residues 1–54 form a disordered region; sequence MAELRHSSSLGSRSSSSPLRAAGDEDSSSPHVHDHSPNGGDDEDGRPRHPSRDR. Residues 1–79 lie on the Cytoplasmic side of the membrane; it reads MAELRHSSSL…DPRVSPQKNK (79 aa). Low complexity predominate over residues 7–20; sequence SSSLGSRSSSSPLR. The span at 45–54 shows a compositional bias: basic and acidic residues; that stretch reads GRPRHPSRDR. The chain crosses the membrane as a helical; Signal-anchor for type II membrane protein span at residues 80 to 100; the sequence is ISLLLILILAIASLISVYGII. The Lumenal portion of the chain corresponds to 101–557; sequence NHLNAPYLCK…NPLTPCMCKA (457 aa). Asparagine 156, asparagine 188, and asparagine 324 each carry an N-linked (GlcNAc...) asparagine glycan. A substrate-binding site is contributed by 336–338; it reads HLR. Asparagine 375 carries an N-linked (GlcNAc...) asparagine glycan.

This sequence belongs to the glycosyltransferase GT106 family. As to expression, widely expressed with the highest expression in reproductive tissues and roots.

Its subcellular location is the golgi apparatus membrane. Its pathway is glycan metabolism; pectin biosynthesis. Its function is as follows. Glycosyltransferase involved in the biosynthesis of pectic type-II arabinogalactans. This is Protein PECTIC ARABINOGALACTAN SYNTHESIS-RELATED from Arabidopsis thaliana (Mouse-ear cress).